Consider the following 396-residue polypeptide: Ribosomal RNA large subunit methyltransferase I (396 aa).

Residues 2 to 79 (SVRLVLAKGR…QAESIDIAFF (78 aa)) enclose the PUA domain.

It belongs to the methyltransferase superfamily. RlmI family.

The protein localises to the cytoplasm. The enzyme catalyses cytidine(1962) in 23S rRNA + S-adenosyl-L-methionine = 5-methylcytidine(1962) in 23S rRNA + S-adenosyl-L-homocysteine + H(+). Specifically methylates the cytosine at position 1962 (m5C1962) of 23S rRNA. The chain is Ribosomal RNA large subunit methyltransferase I from Citrobacter koseri (strain ATCC BAA-895 / CDC 4225-83 / SGSC4696).